The following is a 418-amino-acid chain: MSVFFYLFVLVFGLQATIHCAPHNSSEGKVTTCHLPQQNATLYKMPSINADFAFSLYRRLSVENPDLNIFFSPVSISVALAMLSFGSGSSTQTQILEVLGFNLTDTPVTELQQGFQHLICSLNFPKNELELQMGNAVFIGQQLKPLAKFLDDVKTLYETEVFSTDFSNVSAAQHKINSYVEKQTKGKIVGLIQGLKLNIIMILVNYIHFRAQWANPFRVSKTEESSNFSVDKSTTVQVPMMHQLEQYYHYVDMELNCTVLQMDYSENALALFVLPKEGHMEWVEAAMSSKTLKKWNYLLQKGWVELFVPKFSISATYDLGSTLQKMGMRDAFAESADFPGITEDSGLKLSYAFHKAVLHIGEEGTKEGASPEVGSLDQQEVPPLHPVIRLDRAFLLMILEKRTRSVLFLGKLVNPTKQ.

The N-terminal stretch at 1–20 (MSVFFYLFVLVFGLQATIHC) is a signal peptide. N-linked (GlcNAc...) asparagine glycosylation is found at asparagine 24, asparagine 39, asparagine 102, asparagine 168, asparagine 227, and asparagine 256. Thyroxine contacts are provided by asparagine 296 and lysine 401.

Belongs to the serpin family.

It localises to the secreted. Functionally, major thyroid hormone transport protein in serum. This Mus musculus (Mouse) protein is Thyroxine-binding globulin (Serpina7).